Consider the following 163-residue polypeptide: UPF0587 protein CG4646 (163 aa).

Zn(2+)-binding residues include cysteine 33, cysteine 36, cysteine 68, and cysteine 71.

Belongs to the UPF0587 family.

This chain is UPF0587 protein CG4646, found in Drosophila melanogaster (Fruit fly).